A 291-amino-acid polypeptide reads, in one-letter code: 4-hydroxy-tetrahydrodipicolinate synthase (291 aa).

Pyruvate is bound at residue Thr-44. Catalysis depends on Tyr-132, which acts as the Proton donor/acceptor. Lys-160 acts as the Schiff-base intermediate with substrate in catalysis. A pyruvate-binding site is contributed by Ile-202.

The protein belongs to the DapA family. In terms of assembly, homotetramer; dimer of dimers.

The protein localises to the cytoplasm. It catalyses the reaction L-aspartate 4-semialdehyde + pyruvate = (2S,4S)-4-hydroxy-2,3,4,5-tetrahydrodipicolinate + H2O + H(+). The protein operates within amino-acid biosynthesis; L-lysine biosynthesis via DAP pathway; (S)-tetrahydrodipicolinate from L-aspartate: step 3/4. Functionally, catalyzes the condensation of (S)-aspartate-beta-semialdehyde [(S)-ASA] and pyruvate to 4-hydroxy-tetrahydrodipicolinate (HTPA). The sequence is that of 4-hydroxy-tetrahydrodipicolinate synthase from Zymomonas mobilis subsp. mobilis (strain ATCC 31821 / ZM4 / CP4).